Consider the following 115-residue polypeptide: Ribosomal protein uS4-like (115 aa).

It belongs to the universal ribosomal protein uS4 family.

This is Ribosomal protein uS4-like from Azoarcus sp. (strain BH72).